Here is a 302-residue protein sequence, read N- to C-terminus: Oxygen-dependent coproporphyrinogen-III oxidase (302 aa).

Serine 94 provides a ligand contact to substrate. 2 residues coordinate a divalent metal cation: histidine 98 and histidine 108. Histidine 108 (proton donor) is an active-site residue. Asparagine 110 to arginine 112 lines the substrate pocket. A divalent metal cation-binding residues include histidine 147 and histidine 177. The tract at residues tyrosine 242 to glutamate 277 is important for dimerization. Residue glycine 260 to arginine 262 participates in substrate binding.

This sequence belongs to the aerobic coproporphyrinogen-III oxidase family. Homodimer. The cofactor is a divalent metal cation.

It is found in the cytoplasm. The catalysed reaction is coproporphyrinogen III + O2 + 2 H(+) = protoporphyrinogen IX + 2 CO2 + 2 H2O. It functions in the pathway porphyrin-containing compound metabolism; protoporphyrin-IX biosynthesis; protoporphyrinogen-IX from coproporphyrinogen-III (O2 route): step 1/1. Its function is as follows. Involved in the heme biosynthesis. Catalyzes the aerobic oxidative decarboxylation of propionate groups of rings A and B of coproporphyrinogen-III to yield the vinyl groups in protoporphyrinogen-IX. This is Oxygen-dependent coproporphyrinogen-III oxidase from Erwinia tasmaniensis (strain DSM 17950 / CFBP 7177 / CIP 109463 / NCPPB 4357 / Et1/99).